Here is a 369-residue protein sequence, read N- to C-terminus: Anhydro-N-acetylmuramic acid kinase (369 aa).

12-19 (GTSMDGVD) is a binding site for ATP.

This sequence belongs to the anhydro-N-acetylmuramic acid kinase family.

The catalysed reaction is 1,6-anhydro-N-acetyl-beta-muramate + ATP + H2O = N-acetyl-D-muramate 6-phosphate + ADP + H(+). It functions in the pathway amino-sugar metabolism; 1,6-anhydro-N-acetylmuramate degradation. Its pathway is cell wall biogenesis; peptidoglycan recycling. In terms of biological role, catalyzes the specific phosphorylation of 1,6-anhydro-N-acetylmuramic acid (anhMurNAc) with the simultaneous cleavage of the 1,6-anhydro ring, generating MurNAc-6-P. Is required for the utilization of anhMurNAc either imported from the medium or derived from its own cell wall murein, and thus plays a role in cell wall recycling. In Shewanella sp. (strain MR-7), this protein is Anhydro-N-acetylmuramic acid kinase.